The sequence spans 475 residues: Glycogen synthase (475 aa).

Residue lysine 15 coordinates ADP-alpha-D-glucose.

Belongs to the glycosyltransferase 1 family. Bacterial/plant glycogen synthase subfamily.

It catalyses the reaction [(1-&gt;4)-alpha-D-glucosyl](n) + ADP-alpha-D-glucose = [(1-&gt;4)-alpha-D-glucosyl](n+1) + ADP + H(+). Its pathway is glycan biosynthesis; glycogen biosynthesis. In terms of biological role, synthesizes alpha-1,4-glucan chains using ADP-glucose. This is Glycogen synthase from Alkaliphilus metalliredigens (strain QYMF).